We begin with the raw amino-acid sequence, 224 residues long: Putative N-acetylmannosamine-6-phosphate 2-epimerase (224 aa).

It belongs to the NanE family.

It catalyses the reaction an N-acyl-D-glucosamine 6-phosphate = an N-acyl-D-mannosamine 6-phosphate. The protein operates within amino-sugar metabolism; N-acetylneuraminate degradation; D-fructose 6-phosphate from N-acetylneuraminate: step 3/5. Converts N-acetylmannosamine-6-phosphate (ManNAc-6-P) to N-acetylglucosamine-6-phosphate (GlcNAc-6-P). This is Putative N-acetylmannosamine-6-phosphate 2-epimerase from Staphylococcus carnosus (strain TM300).